A 248-amino-acid polypeptide reads, in one-letter code: 1-(5-phosphoribosyl)-5-[(5-phosphoribosylamino)methylideneamino] imidazole-4-carboxamide isomerase (248 aa).

Asp-8 (proton acceptor) is an active-site residue. Asp-129 functions as the Proton donor in the catalytic mechanism.

The protein belongs to the HisA/HisF family.

The protein localises to the cytoplasm. It carries out the reaction 1-(5-phospho-beta-D-ribosyl)-5-[(5-phospho-beta-D-ribosylamino)methylideneamino]imidazole-4-carboxamide = 5-[(5-phospho-1-deoxy-D-ribulos-1-ylimino)methylamino]-1-(5-phospho-beta-D-ribosyl)imidazole-4-carboxamide. The protein operates within amino-acid biosynthesis; L-histidine biosynthesis; L-histidine from 5-phospho-alpha-D-ribose 1-diphosphate: step 4/9. In Sinorhizobium medicae (strain WSM419) (Ensifer medicae), this protein is 1-(5-phosphoribosyl)-5-[(5-phosphoribosylamino)methylideneamino] imidazole-4-carboxamide isomerase.